The following is a 233-amino-acid chain: Large ribosomal subunit protein uL1 (233 aa).

It belongs to the universal ribosomal protein uL1 family. In terms of assembly, part of the 50S ribosomal subunit.

In terms of biological role, binds directly to 23S rRNA. The L1 stalk is quite mobile in the ribosome, and is involved in E site tRNA release. Protein L1 is also a translational repressor protein, it controls the translation of the L11 operon by binding to its mRNA. The polypeptide is Large ribosomal subunit protein uL1 (Rhodospirillum rubrum (strain ATCC 11170 / ATH 1.1.1 / DSM 467 / LMG 4362 / NCIMB 8255 / S1)).